Reading from the N-terminus, the 162-residue chain is uncharacterized protein (162 aa).

Residues 65-76 are compositionally biased toward basic and acidic residues; that stretch reads EEKPLEVAQDRN. The disordered stretch occupies residues 65–93; it reads EEKPLEVAQDRNNKRKAPSHLEPAHDFIS.

This is an uncharacterized protein from Bacillus subtilis (strain 168).